Reading from the N-terminus, the 283-residue chain is Bifunctional protein FolD (283 aa).

NADP(+)-binding positions include 165 to 167 (GAS), Ser-190, and Ile-231.

Belongs to the tetrahydrofolate dehydrogenase/cyclohydrolase family. In terms of assembly, homodimer.

The enzyme catalyses (6R)-5,10-methylene-5,6,7,8-tetrahydrofolate + NADP(+) = (6R)-5,10-methenyltetrahydrofolate + NADPH. The catalysed reaction is (6R)-5,10-methenyltetrahydrofolate + H2O = (6R)-10-formyltetrahydrofolate + H(+). It functions in the pathway one-carbon metabolism; tetrahydrofolate interconversion. Its function is as follows. Catalyzes the oxidation of 5,10-methylenetetrahydrofolate to 5,10-methenyltetrahydrofolate and then the hydrolysis of 5,10-methenyltetrahydrofolate to 10-formyltetrahydrofolate. This Bordetella bronchiseptica (strain ATCC BAA-588 / NCTC 13252 / RB50) (Alcaligenes bronchisepticus) protein is Bifunctional protein FolD.